A 181-amino-acid polypeptide reads, in one-letter code: Ribosome maturation factor RimM (181 aa).

A PRC barrel domain is found at 98–177 (EGEFFYCDLI…KITTHNAKTL (80 aa)).

This sequence belongs to the RimM family. In terms of assembly, binds ribosomal protein uS19.

Its subcellular location is the cytoplasm. Functionally, an accessory protein needed during the final step in the assembly of 30S ribosomal subunit, possibly for assembly of the head region. Essential for efficient processing of 16S rRNA. May be needed both before and after RbfA during the maturation of 16S rRNA. It has affinity for free ribosomal 30S subunits but not for 70S ribosomes. The chain is Ribosome maturation factor RimM from Helicobacter pylori (strain J99 / ATCC 700824) (Campylobacter pylori J99).